The following is a 188-amino-acid chain: Elongation factor P-like protein (188 aa).

This sequence belongs to the elongation factor P family.

This chain is Elongation factor P-like protein, found in Saccharophagus degradans (strain 2-40 / ATCC 43961 / DSM 17024).